Consider the following 246-residue polypeptide: UDP-N-acetyl-D-mannosaminuronic acid transferase (246 aa).

It belongs to the glycosyltransferase 26 family.

It carries out the reaction UDP-N-acetyl-alpha-D-mannosaminouronate + N-acetyl-alpha-D-glucosaminyl-di-trans,octa-cis-undecaprenyl diphosphate = beta-D-ManNAcA-(1-&gt;4)-alpha-D-GlcNAc-di-trans,octa-cis-undecaprenyl diphosphate + UDP + H(+). The protein operates within bacterial outer membrane biogenesis; enterobacterial common antigen biosynthesis. Catalyzes the synthesis of Und-PP-GlcNAc-ManNAcA (Lipid II), the second lipid-linked intermediate involved in enterobacterial common antigen (ECA) synthesis. The protein is UDP-N-acetyl-D-mannosaminuronic acid transferase of Escherichia coli O127:H6 (strain E2348/69 / EPEC).